Consider the following 416-residue polypeptide: UDP-N-acetylglucosamine 1-carboxyvinyltransferase (416 aa).

22-23 contacts phosphoenolpyruvate; that stretch reads KN. Arg-92 serves as a coordination point for UDP-N-acetyl-alpha-D-glucosamine. Cys-116 serves as the catalytic Proton donor. Position 116 is a 2-(S-cysteinyl)pyruvic acid O-phosphothioketal (Cys-116). Residues 121–125, Asp-304, and Ile-326 each bind UDP-N-acetyl-alpha-D-glucosamine; that span reads RPVDQ.

The protein belongs to the EPSP synthase family. MurA subfamily.

The protein resides in the cytoplasm. It catalyses the reaction phosphoenolpyruvate + UDP-N-acetyl-alpha-D-glucosamine = UDP-N-acetyl-3-O-(1-carboxyvinyl)-alpha-D-glucosamine + phosphate. The protein operates within cell wall biogenesis; peptidoglycan biosynthesis. Functionally, cell wall formation. Adds enolpyruvyl to UDP-N-acetylglucosamine. This chain is UDP-N-acetylglucosamine 1-carboxyvinyltransferase, found in Aromatoleum aromaticum (strain DSM 19018 / LMG 30748 / EbN1) (Azoarcus sp. (strain EbN1)).